A 614-amino-acid polypeptide reads, in one-letter code: Vitamin B12 transporter BtuB (614 aa).

Positions 1 to 20 (MIKKATLLTAFSVTAFSAWA) are cleaved as a signal peptide. The TonB box signature appears at 26 to 33 (DTLVVTAN). The TBDR plug domain occupies 38–152 (PRSAVLAPVT…IGGVVNIITT (115 aa)). Residues Ser85, Asn92, and 110-111 (VS) each bind cyanocob(III)alamin. Residues 155-614 (NPGTELTAGW…EYTLSGSYTF (460 aa)) enclose the TBDR beta-barrel domain. 3 beta stranded membrane-spanning segments follow: residues 158–165 (TELTAGWG), 169–178 (YQNYDISTQQ), and 184–195 (TRATLIGDYEYT). Residues Asp199, Gln211, Asp213, and Asp215 each coordinate Ca(2+). 2 beta stranded membrane passes run 217–227 (FLSKTLYGALE) and 232–248 (DRWS…NRTD). Ca(2+)-binding residues include Tyr249 and Asp250. Ala251 contacts cyanocob(III)alamin. Asp261 lines the Ca(2+) pocket. A run of 14 beta stranded transmembrane segments spans residues 263 to 277 (RKLY…LHFN), 279 to 296 (ERIQ…KDYN), 309 to 325 (TLDE…NSVV), 328 to 337 (HGNVGAGVDW), 353 to 369 (YDQR…QQLG), 371 to 381 (FTLEAAARSDD), 385 to 400 (FGRH…WEFI), 403 to 417 (YRFI…KAPN), 434 to 443 (KSKQWEGAFE), 449 to 458 (VSWRISGYRN), 473 to 490 (YYNE…TANF), 494 to 509 (PLTH…ARNA), 517 to 529 (RRSK…QLDW), and 535 to 550 (DWGM…YDSD). Residue Thr309 participates in cyanocob(III)alamin binding. Arg517 lines the cyanocob(III)alamin pocket. Tyr551 is a cyanocob(III)alamin binding site. Transmembrane regions (beta stranded) follow at residues 558-572 (TVKM…LTVA), 585-596 (IANLFDKDYETV), and 602-614 (AGRE…SYTF). Residues 597–614 (YGYQTAGREYTLSGSYTF) carry the TonB C-terminal box motif.

Belongs to the TonB-dependent receptor family. BtuB (TC 1.B.14.3.1) subfamily.

Its subcellular location is the cell outer membrane. In terms of biological role, involved in the active translocation of vitamin B12 (cyanocobalamin) across the outer membrane to the periplasmic space. It derives its energy for transport by interacting with the trans-periplasmic membrane protein TonB. This chain is Vitamin B12 transporter BtuB, found in Salmonella typhimurium (strain LT2 / SGSC1412 / ATCC 700720).